Here is a 902-residue protein sequence, read N- to C-terminus: MGIATFAVVDLETTGNQLDYDEIIQIGITFVRQNQVIDTYHSMIRTDLEIPPFIQALTSIEEEMLVQAPYFNEVADDIYQLIKDCVFVAHNISFDLNFIKKAFEKCNIQFKPKRVMDTLELFKIAFPTDKSYQLSALAESHHIPLNNAHRADEDATTTAKLMIKAFEKFEQLHLDTQKQLYYLSKNLKYDLYHILFEMVRNYQTKPPNNQFEQFEQIIYRKQIDLKKPAVNFDGTLKDLYKNVTQSLNLTYRPQQLYLAEIILDQLMHSDKAMIEAPLGSGKSLAYLLAATMYNIETGRHVMISTNTKLLQSQLLEKDIPLLNDVLDFKINASLIKSKNDYISLGLISQILKDDTNNYEVSILKMQLLIWITETNTGDIQELNLKGGQKMYVDQKIETYVPVRHDIHYYNYIKRNAQNIQIGITNHAHLIHSDSENTIYQLFDDCIIDEAHRLPDYALNQVTNDLNYSDVKYQLGLIGKNENEKLLKAVDKLEQQRILEKLDIAPIDVFGLKININELHDLNEQLFTTIYNIIQTSDVYDDDIHKYHYVYDFETGEILKDLRAIIDKLNKTIEIFNGMNHKTIKSVRKQLLYLHDKFKLIEQSIKDHHTSFISIKNLAQKSTIRLLVKDYDVKDILTKQVLEKFKSLTFISGTLTFNHSFKAFQNWFNEDIDFNTFEISTPLTSSNHTNVFVPNDVETYNYKNLDDYVASIVDYIVEYITVTQSKCLVLFTSYKMMHMVQDLLNELPELEDYVILTQQQNQNYKIVQQFNNFDKSILLGTSTFFEGFDFQANGLKCVMIAKLPFMNKHNIKYWLMDSEFTSTFKDYVLPDAVTRFRQGLGRLIRHEDDKGLIVSFDDRLVNSTYKSFFAQSLEHFKQRKGNIKQFNKLLNQIQRSIDNESKS.

Positions 8–161 (VVDLETTGNQ…DEDATTTAKL (154 aa)) constitute an Exonuclease domain. Positions 241 to 496 (KNVTQSLNLT…KAVDKLEQQR (256 aa)) constitute a Helicase ATP-binding domain. Residue 276–283 (APLGSGKS) coordinates ATP. The short motif at 448–451 (DEAH) is the DEAH box element. The Helicase C-terminal domain maps to 714–883 (YIVEYITVTQ…HFKQRKGNIK (170 aa)).

This sequence belongs to the helicase family. DinG subfamily. Type 2 sub-subfamily.

Its function is as follows. 3'-5' exonuclease. The chain is 3'-5' exonuclease DinG from Staphylococcus epidermidis (strain ATCC 35984 / DSM 28319 / BCRC 17069 / CCUG 31568 / BM 3577 / RP62A).